The sequence spans 531 residues: Putative UDP-glucuronosyltransferase ugt-46 (531 aa).

A signal peptide spans 1-17; that stretch reads MRLIFVLLATFVNAAFS. N-linked (GlcNAc...) asparagine glycosylation occurs at asparagine 304. Residues 493–513 traverse the membrane as a helical segment; that stretch reads VIIPVFWLSISLVIPTIFGWY.

The protein belongs to the UDP-glycosyltransferase family.

Its subcellular location is the membrane. The catalysed reaction is glucuronate acceptor + UDP-alpha-D-glucuronate = acceptor beta-D-glucuronoside + UDP + H(+). This Caenorhabditis elegans protein is Putative UDP-glucuronosyltransferase ugt-46 (ugt-46).